We begin with the raw amino-acid sequence, 165 residues long: Probable cell wall protein PGA15 (165 aa).

Residues 1–16 (MKFIIILFTLISIVTA) form the signal peptide. A lipid anchor (GPI-anchor amidated serine) is attached at Ser143. The propeptide at 144–165 (GAANYLTSFSIGTFFVFVLGLI) is removed in mature form.

Belongs to the IHD1 family. In terms of processing, the GPI-anchor is attached to the protein in the endoplasmic reticulum and serves to target the protein to the cell surface. There, the glucosamine-inositol phospholipid moiety is cleaved off and the GPI-modified mannoprotein is covalently attached via its lipidless GPI glycan remnant to the 1,6-beta-glucan of the outer cell wall layer.

Its subcellular location is the secreted. The protein resides in the cell wall. It localises to the membrane. Its function is as follows. Probable GPI-anchored cell wall protein that may be involved in cell wall organization, hyphal growth, as well as in virulence. This is Probable cell wall protein PGA15 (PGA15) from Candida albicans (strain SC5314 / ATCC MYA-2876) (Yeast).